The sequence spans 244 residues: UPF0173 metal-dependent hydrolase RoseRS_3945 (244 aa).

This sequence belongs to the UPF0173 family.

The protein is UPF0173 metal-dependent hydrolase RoseRS_3945 of Roseiflexus sp. (strain RS-1).